A 198-amino-acid chain; its full sequence is Ribonuclease HII (198 aa).

The RNase H type-2 domain maps to 10–198; the sequence is QLVAGVDEVG…PVKRALGLAS (189 aa). A divalent metal cation contacts are provided by Asp-16, Glu-17, and Asp-108.

This sequence belongs to the RNase HII family. The cofactor is Mn(2+). Requires Mg(2+) as cofactor.

It is found in the cytoplasm. It catalyses the reaction Endonucleolytic cleavage to 5'-phosphomonoester.. Its function is as follows. Endonuclease that specifically degrades the RNA of RNA-DNA hybrids. The protein is Ribonuclease HII of Citrobacter koseri (strain ATCC BAA-895 / CDC 4225-83 / SGSC4696).